The following is a 293-amino-acid chain: Bifunctional protein FolD (293 aa).

NADP(+)-binding positions include 166–168, Ser191, and Ile232; that span reads GRS.

This sequence belongs to the tetrahydrofolate dehydrogenase/cyclohydrolase family. In terms of assembly, homodimer.

It catalyses the reaction (6R)-5,10-methylene-5,6,7,8-tetrahydrofolate + NADP(+) = (6R)-5,10-methenyltetrahydrofolate + NADPH. It carries out the reaction (6R)-5,10-methenyltetrahydrofolate + H2O = (6R)-10-formyltetrahydrofolate + H(+). It functions in the pathway one-carbon metabolism; tetrahydrofolate interconversion. Functionally, catalyzes the oxidation of 5,10-methylenetetrahydrofolate to 5,10-methenyltetrahydrofolate and then the hydrolysis of 5,10-methenyltetrahydrofolate to 10-formyltetrahydrofolate. The polypeptide is Bifunctional protein FolD (Synechococcus sp. (strain JA-2-3B'a(2-13)) (Cyanobacteria bacterium Yellowstone B-Prime)).